The sequence spans 260 residues: Phosphate import ATP-binding protein PstB (260 aa).

One can recognise an ABC transporter domain in the interval 14–255 (IETENLSLFY…PKNTKTEEYI (242 aa)). ATP is bound at residue 46-53 (GPSGCGKS).

It belongs to the ABC transporter superfamily. Phosphate importer (TC 3.A.1.7) family. In terms of assembly, the complex is composed of two ATP-binding proteins (PstB), two transmembrane proteins (PstC and PstA) and a solute-binding protein (PstS).

The protein localises to the cell inner membrane. It carries out the reaction phosphate(out) + ATP + H2O = ADP + 2 phosphate(in) + H(+). Its function is as follows. Part of the ABC transporter complex PstSACB involved in phosphate import. Responsible for energy coupling to the transport system. This chain is Phosphate import ATP-binding protein PstB, found in Borrelia garinii subsp. bavariensis (strain ATCC BAA-2496 / DSM 23469 / PBi) (Borreliella bavariensis).